Reading from the N-terminus, the 607-residue chain is Pescadillo homolog (607 aa).

The segment at 301–341 (ANVVEQSEKTTEDADEEPETEENLDEFKPADGADNEDSKSL) is disordered. Over residues 313-324 (DADEEPETEENL) the composition is skewed to acidic residues. Residues 325-339 (DEFKPADGADNEDSK) show a composition bias toward basic and acidic residues. The region spanning 348 to 441 (SNTSLFSNFT…ILERTDLYAC (94 aa)) is the BRCT domain. Residues 497 to 604 (ENVEQIDDAE…RDIEKRKKLK (108 aa)) adopt a coiled-coil conformation. Residues 531–607 (QNSKSAKKTK…EKRKKLKVEN (77 aa)) form a disordered region. Basic and acidic residues-rich tracts occupy residues 544 to 561 (RDTLTAEEKEEKEAKELS) and 595 to 607 (RDIEKRKKLKVEN).

Belongs to the pescadillo family. Component of the NOP7 complex, composed of erb1/SPBC4F6.13c, ppp1/SPBC19F5.05c and ytm1/SPAC890.04c. Within the NOP7 complex erb1/SPBC4F6.13c appears to interact directly with ppp1/SPBC19F5.05c and ytm1/SPAC890.04c. The NOP7 complex also associates with the 66S pre-ribosome.

It localises to the nucleus. The protein localises to the nucleoplasm. The protein resides in the nucleolus. Component of the NOP7 complex, which is required for maturation of the 25S and 5.8S ribosomal RNAs and formation of the 60S ribosome. This is Pescadillo homolog (ppp1) from Schizosaccharomyces pombe (strain 972 / ATCC 24843) (Fission yeast).